The chain runs to 861 residues: Leucine--tRNA ligase (861 aa).

A 'HIGH' region motif is present at residues 42–52 (PYPSGKLHMGH). Positions 619–623 (KMSKS) match the 'KMSKS' region motif. Residue lysine 622 coordinates ATP.

The protein belongs to the class-I aminoacyl-tRNA synthetase family.

The protein resides in the cytoplasm. The catalysed reaction is tRNA(Leu) + L-leucine + ATP = L-leucyl-tRNA(Leu) + AMP + diphosphate. In Actinobacillus pleuropneumoniae serotype 5b (strain L20), this protein is Leucine--tRNA ligase.